The primary structure comprises 216 residues: Small ribosomal subunit protein uS3c (216 aa).

The KH type-2 domain occupies 39 to 109 (IRSYINRELE…SIRINVIELT (71 aa)).

This sequence belongs to the universal ribosomal protein uS3 family. Part of the 30S ribosomal subunit.

It is found in the plastid. Its subcellular location is the chloroplast. In Guillardia theta (Cryptophyte), this protein is Small ribosomal subunit protein uS3c (rps3).